The sequence spans 616 residues: Probable Xaa-Pro aminopeptidase P (616 aa).

Mn(2+) is bound by residues Asp413, Asp424, Glu522, and Glu536.

Belongs to the peptidase M24B family. It depends on Mn(2+) as a cofactor.

It catalyses the reaction Release of any N-terminal amino acid, including proline, that is linked to proline, even from a dipeptide or tripeptide.. Catalyzes the removal of a penultimate prolyl residue from the N-termini of peptides. The chain is Probable Xaa-Pro aminopeptidase P (AMPP) from Paracoccidioides brasiliensis (strain Pb03).